The sequence spans 317 residues: Hairy/enhancer-of-split related with YRPW motif protein 1 (317 aa).

The segment at 1 to 59 (MKRNHDFSSSDSELDENIEVEKESADENAGANSPLGSMSPSTTSQVQARKRRRGIIEKR) is disordered. The segment covering 30–47 (GANSPLGSMSPSTTSQVQ) has biased composition (polar residues). Residues 48–103 (ARKRRRGIIEKRRRDRINNSLSELRRLVPSAFEKQGSAKLEKAEILQMTVDHLKML) form the bHLH domain. In terms of domain architecture, Orange spans 121–157 (YRGLGFRECLAETARYLSIIEGLDNTDPLRIRLVSHL). Low complexity-rich tracts occupy residues 193–226 (QQQQ…SAPS) and 248–264 (PPST…TASK). A disordered region spans residues 193–264 (QQQQQQGAPL…PGLTPPTASK (72 aa)). The YRPW motif motif lies at 307–310 (YRPW).

It belongs to the HEY family.

The protein localises to the nucleus. Functionally, transcriptional repressor which functions as a downstream effector of Notch signaling. This is Hairy/enhancer-of-split related with YRPW motif protein 1 (hey1) from Danio rerio (Zebrafish).